A 490-amino-acid polypeptide reads, in one-letter code: tRNA-guanine(15) transglycosylase (490 aa).

Asp-90 acts as the Nucleophile in catalysis. Residues Asp-125 and Ala-193 each coordinate substrate. 3 residues coordinate Zn(2+): Cys-276, Cys-278, and Cys-281.

This sequence belongs to the archaeosine tRNA-ribosyltransferase family. Requires Zn(2+) as cofactor.

The enzyme catalyses guanosine(15) in tRNA + 7-cyano-7-deazaguanine = 7-cyano-7-carbaguanosine(15) in tRNA + guanine. It functions in the pathway tRNA modification; archaeosine-tRNA biosynthesis. Functionally, exchanges the guanine residue with 7-cyano-7-deazaguanine (preQ0) at position 15 in the dihydrouridine loop (D-loop) of archaeal tRNAs. The protein is tRNA-guanine(15) transglycosylase of Methanosarcina acetivorans (strain ATCC 35395 / DSM 2834 / JCM 12185 / C2A).